The following is an 86-amino-acid chain: UPF0297 protein SAHV_1604 (86 aa).

It belongs to the UPF0297 family.

The polypeptide is UPF0297 protein SAHV_1604 (Staphylococcus aureus (strain Mu3 / ATCC 700698)).